The following is a 1058-amino-acid chain: Outer capsid protein VP4 (1058 aa).

This sequence belongs to the orthoreovirus lambda-2 protein family.

The protein resides in the virion. It catalyses the reaction a 5'-end diphospho-ribonucleoside in mRNA + GTP + H(+) = a 5'-end (5'-triphosphoguanosine)-ribonucleoside in mRNA + diphosphate. The enzyme catalyses a 5'-end (5'-triphosphoguanosine)-ribonucleoside in mRNA + S-adenosyl-L-methionine = a 5'-end (N(7)-methyl 5'-triphosphoguanosine)-ribonucleoside in mRNA + S-adenosyl-L-homocysteine. In terms of biological role, outer capsid protein involved in mRNA capping. Catalyzes the last 3 enzymatic activities for formation of the 5' cap structure on the viral plus-strand transcripts, namely the RNA guanylyltransferase, RNA-7N- and RNA-2'O-methyltransferase activities. This Lymantria dispar cypovirus 1 (isolate Rao) (LdCPV-1) protein is Outer capsid protein VP4 (S4).